Consider the following 199-residue polypeptide: Female-specific protein transformer (199 aa).

Disordered regions lie at residues 1-121 (MDAD…RTPR) and 178-199 (YRAGPFRPHPRYSYRNDRQAPN). Basic and acidic residues predominate over residues 20-37 (REKMPYFADEVRERDRVR). Basic residues-rich tracts occupy residues 56–69 (RRSRHERPRSRSRT), 77–92 (CQRRLSRSYVRHRSGS), and 102–119 (SRRRRSRSRSRSRGRSRT).

Its subcellular location is the nucleus speckle. Its function is as follows. Member of the regulatory pathway controlling female somatic sexual differentiation, regulated by Sxl. Activates dsx female-specific splicing by promoting the formation of a splicing enhancer complex which consists of tra, tra2 and sr proteins. The polypeptide is Female-specific protein transformer (tra) (Drosophila virilis (Fruit fly)).